The sequence spans 386 residues: Succinate--CoA ligase [ADP-forming] subunit beta (386 aa).

The region spanning 9-244 is the ATP-grasp domain; it reads KQVLRSSNLN…DSQIDAKEAA (236 aa). Residues K46, 53–55, E99, L102, and E107 contribute to the ATP site; that span reads GRG. Positions 199 and 213 each coordinate Mg(2+). Residues N264 and 321-323 each bind substrate; that span reads GIV.

This sequence belongs to the succinate/malate CoA ligase beta subunit family. Heterotetramer of two alpha and two beta subunits. Mg(2+) serves as cofactor.

The catalysed reaction is succinate + ATP + CoA = succinyl-CoA + ADP + phosphate. The enzyme catalyses GTP + succinate + CoA = succinyl-CoA + GDP + phosphate. It functions in the pathway carbohydrate metabolism; tricarboxylic acid cycle; succinate from succinyl-CoA (ligase route): step 1/1. In terms of biological role, succinyl-CoA synthetase functions in the citric acid cycle (TCA), coupling the hydrolysis of succinyl-CoA to the synthesis of either ATP or GTP and thus represents the only step of substrate-level phosphorylation in the TCA. The beta subunit provides nucleotide specificity of the enzyme and binds the substrate succinate, while the binding sites for coenzyme A and phosphate are found in the alpha subunit. The chain is Succinate--CoA ligase [ADP-forming] subunit beta from Thiobacillus denitrificans (strain ATCC 25259 / T1).